Here is a 389-residue protein sequence, read N- to C-terminus: MEYKFGEYGGQYVPEVLMPSLKELEKAYKKYKDDPEFKEELEYYLKQYAGRETPLYFAENLTKKMGGAKIYLKREDLLLGGAHKINNSLGQALLAKRIGKTRIIAETGAGEHGLSTAMVGALFGLKAKIYMGAVDVERQKLNVYKMRLHGAEVHAVQSGSKTLKDAINEALRDWVETFEDTHYIIGSAVGPYPFPSMVRDFQSVIGKEAKKQILEAEGRLPDSIVACVGGGSNSIGIFNEFKQDKEVKLIGVEAAGEGLDTDRHGAAILKGKKGVLHGMLSKFLQDDDGQIAETYSISAGLDYPGVGPEHAYLDEIKRVEYAGITDVEALDAFSTLSKTEGIIPALESSHAVAHGMKIAKEMDKDEIIIINLSGRGDKDIHTVMNFIEF.

At Lys-84 the chain carries N6-(pyridoxal phosphate)lysine.

The protein belongs to the TrpB family. In terms of assembly, tetramer of two alpha and two beta chains. It depends on pyridoxal 5'-phosphate as a cofactor.

The enzyme catalyses (1S,2R)-1-C-(indol-3-yl)glycerol 3-phosphate + L-serine = D-glyceraldehyde 3-phosphate + L-tryptophan + H2O. It functions in the pathway amino-acid biosynthesis; L-tryptophan biosynthesis; L-tryptophan from chorismate: step 5/5. In terms of biological role, the beta subunit is responsible for the synthesis of L-tryptophan from indole and L-serine. In Methanococcus aeolicus (strain ATCC BAA-1280 / DSM 17508 / OCM 812 / Nankai-3), this protein is Tryptophan synthase beta chain.